The primary structure comprises 260 residues: Global transcriptional regulator CodY (260 aa).

The interval 1–159 (MPNLLEKTRK…SSTVVGIQLL (159 aa)) is GAF domain. A DNA-binding region (H-T-H motif) is located at residues 207-226 (ASVIADRIGITRSVIVNALR).

This sequence belongs to the CodY family.

The protein localises to the cytoplasm. DNA-binding global transcriptional regulator which is involved in the adaptive response to starvation and acts by directly or indirectly controlling the expression of numerous genes in response to nutrient availability. During rapid exponential growth, CodY is highly active and represses genes whose products allow adaptation to nutrient depletion. In Streptococcus pyogenes serotype M4 (strain MGAS10750), this protein is Global transcriptional regulator CodY.